A 68-amino-acid polypeptide reads, in one-letter code: Large ribosomal subunit protein uL30 (68 aa).

It belongs to the universal ribosomal protein uL30 family. In terms of assembly, part of the 50S ribosomal subunit.

This chain is Large ribosomal subunit protein uL30, found in Bartonella quintana (strain Toulouse) (Rochalimaea quintana).